We begin with the raw amino-acid sequence, 2136 residues long: MADVTARSLQYEYKANSNLVLQADRSLIDRTRRDEPTGEVLSLVGKLEGTRMGDKAQRTKPQMQEERRAKRRKRDEDRHDMNKMKGYTLLSEGIDEMVGIIYKPKTKETRETYEVLLSFIQAALGDQPRDILCGAADEVLAVLKNEKLRDKERRREIDLLLGQTDDTRYHVLVNLGKKITDYGGDKEIQNMDDNIDETYGVNVQFESDEEEGDEDVYGEVREEASDDDMEGDEAVVRCTLSANLVASGELMSSKKKDLHPRDIDAFWLQRQLSRFYDDAIVSQKKADEVLEILKTASDDRECENQLVLLLGFNTFDFIKVLRQHRMMILYCTLLASAQSEPEKERIVGKMEADPELSKFLYQLHETEKEDLIREERSRRERVRQSRMDTDLETMDLDQGGEALAPRQVLDLEDLVFTQGSHFMANKRCQLPDGSFRRQRKGYEEVHVPALKPKPFGSEEQLLPVEKLPKYAQAGFEGFKTLNRIQSKLYRAALETDENLLLCAPTGAGKTNVALMCMLREIGKHINMDGTINVDDFKIIYIAPMRSLVQEMVGSFGKRLATYGITVAELTGDHQLCKEEISATQIIVCTPEKWDIITRKGGERTYTQLVRLIVLDEIHLLHDDRGPVLEALVARAIRNIEMTQEDVRLIGLSATLPNYEDVATFLRVDPAKGLFYFDNSFRPVPLEQTYVGITEKKAIKRFQIMNEIVYEKIMEHAGKNQVLVFVHSRKETGKTARAIRDMCLEKDTLGLFLREGSASTEVLRTEAEQCKNLELKDLLPYGFAIHHAGMTRVDRTLVEDLFADKHIQVLVSTATLAWGVNLPAHTVIIKGTQVYSPEKGRWTELGALDILQMLGRAGRPQYDTKGEGILITSHGELQYYLSLLNQQLPIESQMVSKLPDMLNAEIVLGNVQNAKDAVNWLGYAYLYIRMLRSPTLYGISHDDLKGDPLLDQRRLDLVHTAALMLDKNNLVKYDKKTGNFQVTELGRIASHYYITNDTVQTYNQLLKPTLSEIELFRVFSLSSEFKNITVREEEKLELQKLLERVPIPVKESIEEPSAKINVLLQAFISQLKLEGFALMADMVYVTQSAGRLMRAIFEIVLNRGWAQLTDKTLNLCKMIDKRMWQSMCPLRQFRKLPEEVVKKIEKKNFPFERLYDLNHNEIGELIRMPKMGKTIHKYVHLFPKLELSVHLQPITRSTLKVELTITPDFQWDEKVHGSSEAFWILVEDVDSEVILHHEYFLLKAKYAQDEHLITFFVPVFEPLPPQYFIRVVSDRWLSCETQLPVSFRHLILPEKYPPPTELLDLQPLPVSALRNSAFESLYQDKFPFFNPIQTQVFNTVYNSDDNVFVGAPTGSGKTICAEFAILRMLLQNSEGRCVYITPMEALAEQVYMDWYEKFQDRLNKKVVLLTGETSTDLKLLGKGNIIISTPEKWDILSRRWKQRKNVQNINLFVVDEVHLIGGENGPVLEVICSRMRYISSQIERPIRIVALSSSLSNAKDVAHWLGCSATSTFNFHPNVRPVPLELHIQGFNISHTQTRLLSMAKPVYHAITKHSPKKPVIVFVPSRKQTRLTAIDILTTCAADIQRQRFLHCTEKDLIPYLEKLSDSTLKETLLNGVGYLHEGLSPMERRLVEQLFSSGAIQVVVASRSLCWGMNVAAHLVIIMDTQYYNGKIHAYVDYPIYDVLQMVGHANRPLQDDEGRCVIMCQGSKKDFFKKFLYEPLPVESHLDHCMHDHFNAEIVTKTIENKQDAVDYLTWTFLYRRMTQNPNYYNLQGISHRHLSDHLSELVEQTLSDLEQSKCISIEDEMDVAPLNLGMIAAYYYINYTTIELFSMSLNAKTKVRGLIEIISNAAEYENIPIRHHEDNLLRQLAQKVPHKLNNPKFNDPHVKTNLLLQAHLSRMQLSAELQSDTEEILSKAIRLIQACVDVLSSNGWLSPALAAMELAQMVTQAMWSKDSYLKQLPHFTSEHIKRCTDKGVESVFDIMEMEDEERNALLQLTDSQIADVARFCNRYPNIELSYEVVDKDSIRSGGPVVVLVQLEREEEVTGPVIAPLFPQKREEGWWVVIGDAKSNSLISIKRLTLQQKAKVKLDFVAPATGGHNYTLYFMSDAYMGCDQEYKFSVDVKEAETDSDSD.

S17 and S26 each carry phosphoserine. A disordered region spans residues 39–81 (EVLSLVGKLEGTRMGDKAQRTKPQMQEERRAKRRKRDEDRHDM). K46 participates in a covalent cross-link: Glycyl lysine isopeptide (Lys-Gly) (interchain with G-Cter in SUMO2). The segment covering 48-81 (EGTRMGDKAQRTKPQMQEERRAKRRKRDEDRHDM) has biased composition (basic and acidic residues). Residues 54-84 (DKAQRTKPQMQEERRAKRRKRDEDRHDMNKM) adopt a coiled-coil conformation. S225 bears the Phosphoserine mark. Phosphothreonine is present on T389. The interval 395-2129 (DLDQGGEALA…YKFSVDVKEA (1735 aa)) is interaction with C9orf78 and WBP4. In terms of domain architecture, Helicase ATP-binding 1 spans 490 to 673 (RAALETDENL…FLRVDPAKGL (184 aa)). 503 to 510 (APTGAGKT) contributes to the ATP binding site. The short motif at 615–618 (DEIH) is the DEAH box element. The region spanning 684–921 (PLEQTYVGIT…NAKDAVNWLG (238 aa)) is the Helicase C-terminal 1 domain. Position 709 is a phosphotyrosine (Y709). A Glycyl lysine isopeptide (Lys-Gly) (interchain with G-Cter in SUMO) cross-link involves residue K944. K971 bears the N6-acetyllysine; alternate mark. Residue K971 forms a Glycyl lysine isopeptide (Lys-Gly) (interchain with G-Cter in SUMO); alternate linkage. The region spanning 982-1286 (TELGRIASHY…SCETQLPVSF (305 aa)) is the SEC63 1 domain. Residues K1071 and K1199 each participate in a glycyl lysine isopeptide (Lys-Gly) (interchain with G-Cter in SUMO) cross-link. The tract at residues 1282-2136 (LPVSFRHLIL…KEAETDSDSD (855 aa)) is interaction with TSSC4. In terms of domain architecture, Helicase ATP-binding 2 spans 1337-1512 (NTVYNSDDNV…WLGCSATSTF (176 aa)). Residue 1350–1357 (APTGSGKT) coordinates ATP. The residue at position 1428 (T1428) is a Phosphothreonine. The short motif at 1454–1457 (DEVH) is the DEAH box element. Positions 1545–1753 (PVYHAITKHS…TIENKQDAVD (209 aa)) constitute a Helicase C-terminal 2 domain. Residue T1765 is modified to Phosphothreonine. Residues 1812–2124 (PLNLGMIAAY…GCDQEYKFSV (313 aa)) form the SEC63 2 domain. At S2002 the chain carries Phosphoserine. A Glycyl lysine isopeptide (Lys-Gly) (interchain with G-Cter in SUMO) cross-link involves residue K2091. The residue at position 2131 (T2131) is a Phosphothreonine. A phosphoserine mark is found at S2133 and S2135.

Belongs to the helicase family. SKI2 subfamily. As to quaternary structure, component of a core complex containing at least PRPF8, SNRNP200, EFTUD2 and SNRNP40. Component of the U5 snRNP and U4/U6-U5 tri-snRNP complexes, building blocks of the spliceosome. Component of the U4/U6-U5 tri-snRNP complex composed of the U4, U6 and U5 snRNAs and at least PRPF3, PRPF4, PRPF6, PRPF8, PRPF31, SNRNP200, TXNL4A, SNRNP40, DDX23, CD2BP2, PPIH, SNU13, EFTUD2, SART1 and USP39. Component of precatalytic, catalytic and postcatalytic spliceosomal complexes. Component of the minor spliceosome, which splices U12-type introns. Interacts with C9orf78; the interaction is direct and mutually exclusive with its interaction with WBP4. Interacts with WBP4; the interaction is mutually exclusive with its interaction with C9orf78. Interacts with PRPF8. Interacts with TSSC4; the interaction is direct, excludes recruitment of C9ORF78 and WBP4 to SNRNP200 and negatively regulates its RNA helicase activity.

It localises to the nucleus. The catalysed reaction is ATP + H2O = ADP + phosphate + H(+). In terms of biological role, catalyzes the ATP-dependent unwinding of U4/U6 RNA duplices, an essential step in the assembly of a catalytically active spliceosome. Plays a role in pre-mRNA splicing as core component of precatalytic, catalytic and postcatalytic spliceosomal complexes. As a component of the minor spliceosome, involved in the splicing of U12-type introns in pre-mRNAs. Involved in spliceosome assembly, activation and disassembly. Mediates changes in the dynamic network of RNA-RNA interactions in the spliceosome. In Mus musculus (Mouse), this protein is U5 small nuclear ribonucleoprotein 200 kDa helicase (Snrnp200).